Reading from the N-terminus, the 466-residue chain is Integrin-linked protein kinase homolog pat-4 (466 aa).

ANK repeat units lie at residues 50–79 (HAFS…RVNS), 83–112 (GDDT…DVNA), and 116–145 (HGMT…AVNV). The Protein kinase domain maps to 210 to 465 (LNLITKIAES…QIIPILERMI (256 aa)).

The protein belongs to the protein kinase superfamily. TKL Ser/Thr protein kinase family. As to quaternary structure, interacts (via protein kinase domain) with unc-112 (via N-terminus). Interacts (via ANK repeats) with unc-97 (via first LIM domain). Interacts (via protein kinase domain) with pat-6 (via C-terminus CH domain). May form a complex with unc-112, unc-97 and pat-6. Does not interact with integrin pat-3. Component of an integrin containing attachment complex, composed of at least pat-2, pat-3, pat-4, pat-6, unc-52, unc-97 and unc-112. As to expression, expressed in body wall muscle.

The protein localises to the cytoplasm. It localises to the myofibril. Its subcellular location is the sarcomere. The protein resides in the m line. It is found in the basal cell membrane. Its function is as follows. Probable pseudokinase that acts as an adapter protein. Component of an integrin containing attachment complex, which is required for muscle development and maintenance. Involved in the assembly of dense bodies and M lines during body wall muscle development by recruiting several of their components including integrin pat-3, cpna-1, unc-89 and unc-112 to integrin-mediated attachment sites. Plays a role in distal tip cell (DTC) migration and in oocyte development probably by regulating the actin cytoskeleton. During the formation of neuromuscular junctions at the larval stage, negatively regulates membrane protrusion from body wall muscles. May be involved in thermotolerance and lifespan. The chain is Integrin-linked protein kinase homolog pat-4 from Caenorhabditis elegans.